Reading from the N-terminus, the 420-residue chain is Bicoumarin synthase ktnC (420 aa).

A heme-binding site is contributed by Cys362.

The protein belongs to the cytochrome P450 family. It depends on heme as a cofactor.

The catalysed reaction is 2 7-demethylsiderin + NADPH + O2 = orlandin + NADP(+) + 2 H2O. The protein operates within secondary metabolite biosynthesis. In terms of biological role, non-reducing polyketide synthase; part of the gene cluster that mediates the biosynthesis of the bicoumarin kotanin. The non-reducing polyketide synthase ktnS first catalyzes the formation of the pentaketidic 4,7-dihydroxy-5-methylcoumarin from acetyl coenzyme A and 4 malonyl coenzyme A molecules. Further O-methylation by ktnB leads to the formation of 7-demethylsiderin. Then, an oxidative phenol coupling catalyzed by the cytochrome P450 monooxygenase ktnC forms the 8,8'-dimer P-orlandin via dimerization the monomeric precursor, 7-demethylsiderin. P-orlandin is subsequently O-methylated in a stepwise fashion to demethylkotanin and kotanin. In Aspergillus niger (strain ATCC MYA-4892 / CBS 513.88 / FGSC A1513), this protein is Bicoumarin synthase ktnC.